Consider the following 185-residue polypeptide: UPF0301 protein Shew_1144 (185 aa).

It belongs to the UPF0301 (AlgH) family.

This chain is UPF0301 protein Shew_1144, found in Shewanella loihica (strain ATCC BAA-1088 / PV-4).